The chain runs to 239 residues: tRNA (guanine-N(7)-)-methyltransferase (239 aa).

S-adenosyl-L-methionine-binding residues include Glu68, Glu93, Asp120, and Asp143. The active site involves Asp143. Residues Lys147, Asp180, and 217–220 (TKFE) contribute to the substrate site.

It belongs to the class I-like SAM-binding methyltransferase superfamily. TrmB family.

The enzyme catalyses guanosine(46) in tRNA + S-adenosyl-L-methionine = N(7)-methylguanosine(46) in tRNA + S-adenosyl-L-homocysteine. Its pathway is tRNA modification; N(7)-methylguanine-tRNA biosynthesis. Functionally, catalyzes the formation of N(7)-methylguanine at position 46 (m7G46) in tRNA. This chain is tRNA (guanine-N(7)-)-methyltransferase, found in Vibrio cholerae serotype O1 (strain ATCC 39315 / El Tor Inaba N16961).